The sequence spans 408 residues: Succinylornithine transaminase (408 aa).

K252 is subject to N6-(pyridoxal phosphate)lysine.

It belongs to the class-III pyridoxal-phosphate-dependent aminotransferase family. AstC subfamily. Pyridoxal 5'-phosphate is required as a cofactor.

It catalyses the reaction N(2)-succinyl-L-ornithine + 2-oxoglutarate = N-succinyl-L-glutamate 5-semialdehyde + L-glutamate. Its pathway is amino-acid degradation; L-arginine degradation via AST pathway; L-glutamate and succinate from L-arginine: step 3/5. Its function is as follows. Catalyzes the transamination of N(2)-succinylornithine and alpha-ketoglutarate into N(2)-succinylglutamate semialdehyde and glutamate. Can also act as an acetylornithine aminotransferase. This chain is Succinylornithine transaminase, found in Salmonella choleraesuis (strain SC-B67).